A 664-amino-acid polypeptide reads, in one-letter code: Armadillo repeat protein involved in nucleocytoplasmic transport Syo2 (664 aa).

The stretch at 77–119 (GLVSKLIDRISDDSVEVVVEATGALRNLAIEEGYSICMDMYRK) is one ARM repeat.

This sequence belongs to the nuclear import and ribosome assembly adapter family. As to quaternary structure, forms a heterotrimeric complex with rpl5 and rpl11a or rpl11b; interaction of this complex with kap104 allows the nuclear import of the heterotrimer. Component of a hexameric 5S RNP precursor complex; this complex acts as a precursor for ribosome assembly.

The protein resides in the cytoplasm. It localises to the nucleus. Nuclear import adapter that specifically recruits the two functionally and topologically linked ribosomal proteins rpl5 and rpl11 (encoded by rpl11a and rpl11b). Guarantees that this cargo pair remains bound together from the time of synthesis in the cytoplasm until delivery to the nascent 5S rRNA in the nucleus. The sequence is that of Armadillo repeat protein involved in nucleocytoplasmic transport Syo2 from Schizosaccharomyces pombe (strain 972 / ATCC 24843) (Fission yeast).